The primary structure comprises 260 residues: MYVGYLLDKDTNMYPSPVRHPSLNLNPQNYVPGPPQYSDFASYHHVPGINNDPHHGQPAAAWGSPYTPAKEDWHSYGTAAASAATNPGQFGFSPPDFNPMQPHAGSGLLPPAISSSVPQLSPNAQRRTPYEWMRRSIPSTSSSGKTRTKDKYRVVYTDHQRLELEKEFHYSRYITIRRKAELAAALGLTERQVKIWFQNRRAKERKVNKKKLQQQSQPTSTTTPTPPAVGTPGPMGTLCSGSAPSLVSSSPLTIKEEFMP.

A DNA-binding region (homeobox) is located at residues 149 to 208 (KDKYRVVYTDHQRLELEKEFHYSRYITIRRKAELAAALGLTERQVKIWFQNRRAKERKVN). The tract at residues 152 to 173 (YRVVYTDHQRLELEKEFHYSRY) is interaction with DNA. Positions 191 to 202 (RQVKIWFQNRRA) are interaction with 5-mCpG DNA. The interval 204–260 (ERKVNKKKLQQQSQPTSTTTPTPPAVGTPGPMGTLCSGSAPSLVSSSPLTIKEEFMP) is disordered. Composition is skewed to low complexity over residues 213 to 223 (QQQSQPTSTTT) and 240 to 252 (SGSA…SSPL).

This sequence belongs to the Caudal homeobox family.

The protein resides in the nucleus. In terms of biological role, plays a role in transcriptional regulation. Involved in activated KRAS-mediated transcriptional activation of PRKD1. Binds to the PRKD1 promoter. Could play a role in the terminal differentiation of the intestine. Binds preferentially to methylated DNA. This is Homeobox protein CDX-1 (CDX1) from Gallus gallus (Chicken).